We begin with the raw amino-acid sequence, 308 residues long: tRNA dimethylallyltransferase (308 aa).

Gly-9–Thr-16 contributes to the ATP binding site. Thr-11–Thr-16 is a binding site for substrate. Residues Asp-34 to Gln-37 form an interaction with substrate tRNA region.

The protein belongs to the IPP transferase family. As to quaternary structure, monomer. It depends on Mg(2+) as a cofactor.

The catalysed reaction is adenosine(37) in tRNA + dimethylallyl diphosphate = N(6)-dimethylallyladenosine(37) in tRNA + diphosphate. Catalyzes the transfer of a dimethylallyl group onto the adenine at position 37 in tRNAs that read codons beginning with uridine, leading to the formation of N6-(dimethylallyl)adenosine (i(6)A). The chain is tRNA dimethylallyltransferase from Lactobacillus delbrueckii subsp. bulgaricus (strain ATCC BAA-365 / Lb-18).